Here is an 860-residue protein sequence, read N- to C-terminus: Alanine--tRNA ligase (860 aa).

The Zn(2+) site is built by histidine 553, histidine 557, cysteine 655, and histidine 659.

It belongs to the class-II aminoacyl-tRNA synthetase family. Requires Zn(2+) as cofactor.

The protein resides in the cytoplasm. It catalyses the reaction tRNA(Ala) + L-alanine + ATP = L-alanyl-tRNA(Ala) + AMP + diphosphate. Catalyzes the attachment of alanine to tRNA(Ala) in a two-step reaction: alanine is first activated by ATP to form Ala-AMP and then transferred to the acceptor end of tRNA(Ala). Also edits incorrectly charged Ser-tRNA(Ala) and Gly-tRNA(Ala) via its editing domain. This Legionella pneumophila (strain Corby) protein is Alanine--tRNA ligase.